Here is a 176-residue protein sequence, read N- to C-terminus: Lactoylglutathione lyase (176 aa).

The VOC domain occupies 23–167; the sequence is VFNHTMLRVK…DGYWVEIVQA (145 aa). Residue histidine 26 participates in Ni(2+) binding. Arginine 30 is a binding site for substrate. Residue glutamate 92 participates in Ni(2+) binding. Substrate contacts are provided by asparagine 96, arginine 114, and histidine 118. Ni(2+) is bound by residues histidine 118 and glutamate 163. Glutamate 163 functions as the Proton donor/acceptor in the catalytic mechanism.

This sequence belongs to the glyoxalase I family. As to quaternary structure, monomer. Requires Ni(2+) as cofactor. Zn(2+) is required as a cofactor.

It catalyses the reaction (R)-S-lactoylglutathione = methylglyoxal + glutathione. It participates in secondary metabolite metabolism; methylglyoxal degradation; (R)-lactate from methylglyoxal: step 1/2. Catalyzes the conversion of hemimercaptal, formed from methylglyoxal and glutathione, to S-lactoylglutathione. The sequence is that of Lactoylglutathione lyase (gloA) from Pseudomonas aeruginosa (strain ATCC 15692 / DSM 22644 / CIP 104116 / JCM 14847 / LMG 12228 / 1C / PRS 101 / PAO1).